We begin with the raw amino-acid sequence, 178 residues long: Cytidylate kinase (178 aa).

7–15 (GLPGTGTTT) contacts ATP.

This sequence belongs to the cytidylate kinase family. Type 2 subfamily.

Its subcellular location is the cytoplasm. It catalyses the reaction CMP + ATP = CDP + ADP. It carries out the reaction dCMP + ATP = dCDP + ADP. This Methanococcus maripaludis (strain DSM 14266 / JCM 13030 / NBRC 101832 / S2 / LL) protein is Cytidylate kinase.